A 191-amino-acid chain; its full sequence is UPF0312 protein SO_3370 (191 aa).

Residues Met1–Ala22 form the signal peptide.

It belongs to the UPF0312 family. Type 1 subfamily.

It localises to the periplasm. The polypeptide is UPF0312 protein SO_3370 (Shewanella oneidensis (strain ATCC 700550 / JCM 31522 / CIP 106686 / LMG 19005 / NCIMB 14063 / MR-1)).